Consider the following 347-residue polypeptide: N-acetyl-gamma-glutamyl-phosphate reductase (347 aa).

Cysteine 152 is a catalytic residue.

Belongs to the NAGSA dehydrogenase family. Type 1 subfamily.

Its subcellular location is the cytoplasm. The enzyme catalyses N-acetyl-L-glutamate 5-semialdehyde + phosphate + NADP(+) = N-acetyl-L-glutamyl 5-phosphate + NADPH + H(+). It participates in amino-acid biosynthesis; L-arginine biosynthesis; N(2)-acetyl-L-ornithine from L-glutamate: step 3/4. Its function is as follows. Catalyzes the NADPH-dependent reduction of N-acetyl-5-glutamyl phosphate to yield N-acetyl-L-glutamate 5-semialdehyde. The protein is N-acetyl-gamma-glutamyl-phosphate reductase of Neisseria gonorrhoeae (strain ATCC 700825 / FA 1090).